We begin with the raw amino-acid sequence, 171 residues long: Co-chaperone protein HscB (171 aa).

The J domain maps to 2-74; the sequence is DYFTLFGLPA…LTRAEYLLSL (73 aa).

It belongs to the HscB family. Interacts with HscA and stimulates its ATPase activity. Interacts with IscU.

Its function is as follows. Co-chaperone involved in the maturation of iron-sulfur cluster-containing proteins. Seems to help targeting proteins to be folded toward HscA. The sequence is that of Co-chaperone protein HscB from Klebsiella pneumoniae subsp. pneumoniae (strain ATCC 700721 / MGH 78578).